A 431-amino-acid polypeptide reads, in one-letter code: L-lysine N6-monooxygenase MbtG (431 aa).

The first 21 residues, 1-21 (MNPTLAVLGAGAKAVAVAAKA), serve as a signal peptide directing secretion.

Belongs to the lysine N(6)-hydroxylase/L-ornithine N(5)-oxygenase family. FAD serves as cofactor.

It catalyses the reaction L-lysine + NADPH + O2 = N(6)-hydroxy-L-lysine + NADP(+) + H2O. The protein operates within siderophore biosynthesis; mycobactin biosynthesis. Flavoprotein monooxygenase required for N-hydroxylation of the two acylated lysine residues during mycobactin assembly, thus producing the hydroxamate groups necessary for iron sequestration. Is also able, but less efficiently, to hydroxylate L-lysine (non acylated) in vitro. This Mycobacterium bovis (strain ATCC BAA-935 / AF2122/97) protein is L-lysine N6-monooxygenase MbtG (mbtG).